A 274-amino-acid chain; its full sequence is 2,3,4,5-tetrahydropyridine-2,6-dicarboxylate N-succinyltransferase (274 aa).

Residues arginine 106 and aspartate 143 each coordinate substrate.

The protein belongs to the transferase hexapeptide repeat family. As to quaternary structure, homotrimer.

The protein resides in the cytoplasm. The catalysed reaction is (S)-2,3,4,5-tetrahydrodipicolinate + succinyl-CoA + H2O = (S)-2-succinylamino-6-oxoheptanedioate + CoA. Its pathway is amino-acid biosynthesis; L-lysine biosynthesis via DAP pathway; LL-2,6-diaminopimelate from (S)-tetrahydrodipicolinate (succinylase route): step 1/3. The chain is 2,3,4,5-tetrahydropyridine-2,6-dicarboxylate N-succinyltransferase from Rickettsia typhi (strain ATCC VR-144 / Wilmington).